The sequence spans 504 residues: 2-methylcitrate dehydratase 2 (504 aa).

Belongs to the PrpD family. As to quaternary structure, monomer.

It carries out the reaction (2S,3S)-2-methylcitrate = 2-methyl-cis-aconitate + H2O. The enzyme catalyses citrate = D-threo-isocitrate. Its pathway is organic acid metabolism; propanoate degradation. The protein operates within carbohydrate metabolism; tricarboxylic acid cycle; isocitrate from oxaloacetate: step 1/2. In terms of biological role, involved in the catabolism of short chain fatty acids (SCFA) via the 2-methylcitrate cycle I (propionate degradation route). Catalyzes the dehydration of 2-methylcitrate (2-MC) to yield the cis isomer 2-methyl-aconitate. Could also catalyze the dehydration of citrate and the hydration of cis-aconitate. This chain is 2-methylcitrate dehydratase 2 (prpD2), found in Corynebacterium glutamicum (strain ATCC 13032 / DSM 20300 / JCM 1318 / BCRC 11384 / CCUG 27702 / LMG 3730 / NBRC 12168 / NCIMB 10025 / NRRL B-2784 / 534).